Consider the following 283-residue polypeptide: Pseudokinase OPG198 (283 aa).

Residues Met-1 and Lys-30 each contribute to the ATP site. The Protein kinase domain maps to 1–283; sequence MESFKYCFDN…DRLRKLFIQD (283 aa).

It belongs to the protein kinase superfamily. Ser/Thr protein kinase family. Poxviruses subfamily. Interacts with B1/VPK1. Interacts with host VRK1. Interacts with host VRK2.

The protein resides in the host nucleus. With respect to regulation, both catalytically active kinases B1/VPK1 and host VRK2 repress B12 inhibitory activity in a B1/VPK1 deletion mutant strain. Its function is as follows. Pseudokinase that plays a role in viral DNA replication repression by activating the antiviral protein BANF1 and inhibiting the activity of host VRK1, a cellular modulator of BANF1. This chain is Pseudokinase OPG198 (OPG198), found in Vaccinia virus (strain Western Reserve) (VACV).